Here is a 306-residue protein sequence, read N- to C-terminus: Probable zinc metalloprotease VDBG_06923 (306 aa).

The signal sequence occupies residues 1-28 (MNYEAEQPGANDDASGVAVALELARVLA). Zn(2+) contacts are provided by D12 and E45. N60 carries N-linked (GlcNAc...) asparagine glycosylation. D72 contributes to the Zn(2+) binding site. The region spanning 218–306 (APAKVNNVRV…KSPVTIPFPT (89 aa)) is the Fibronectin type-III domain. 3 N-linked (GlcNAc...) asparagine glycosylation sites follow: N228, N234, and N244.

This sequence belongs to the peptidase M28 family. M28B subfamily. Zn(2+) is required as a cofactor.

The protein localises to the secreted. The protein is Probable zinc metalloprotease VDBG_06923 of Verticillium alfalfae (strain VaMs.102 / ATCC MYA-4576 / FGSC 10136) (Verticillium wilt of alfalfa).